The primary structure comprises 252 residues: 1-(5-phosphoribosyl)-5-[(5-phosphoribosylamino)methylideneamino] imidazole-4-carboxamide isomerase (252 aa).

The active-site Proton acceptor is the aspartate 8. The active-site Proton donor is the aspartate 129.

It belongs to the HisA/HisF family.

The protein resides in the cytoplasm. The enzyme catalyses 1-(5-phospho-beta-D-ribosyl)-5-[(5-phospho-beta-D-ribosylamino)methylideneamino]imidazole-4-carboxamide = 5-[(5-phospho-1-deoxy-D-ribulos-1-ylimino)methylamino]-1-(5-phospho-beta-D-ribosyl)imidazole-4-carboxamide. Its pathway is amino-acid biosynthesis; L-histidine biosynthesis; L-histidine from 5-phospho-alpha-D-ribose 1-diphosphate: step 4/9. The polypeptide is 1-(5-phosphoribosyl)-5-[(5-phosphoribosylamino)methylideneamino] imidazole-4-carboxamide isomerase (Synechococcus sp. (strain RCC307)).